Consider the following 254-residue polypeptide: Homeobox protein Nkx-6.3 (254 aa).

2 disordered regions span residues 112 to 140 and 191 to 228; these read QDWR…RPTF and KSAV…DPDS. A compositionally biased stretch (polar residues) spans 120-129; that stretch reads ALSSASNTEG. A DNA-binding region (homeobox) is located at residues 133-192; sequence KKHTRPTFTGHQIFALEKTFEQTKYLAGPERARLAFSLGMSESQVKVWFQNRRTKWRKKS.

It is found in the nucleus. Its function is as follows. Putative transcription factor, which may be involved in patterning of central nervous system and pancreas. The sequence is that of Homeobox protein Nkx-6.3 (nkx6-3) from Xenopus laevis (African clawed frog).